The following is a 501-amino-acid chain: Ribose import ATP-binding protein RbsA (501 aa).

ABC transporter domains lie at 8–245 (LKMV…VGRT) and 255–500 (VKKG…VGIN). 40 to 47 (GENGAGKS) serves as a coordination point for ATP.

This sequence belongs to the ABC transporter superfamily. Ribose importer (TC 3.A.1.2.1) family. As to quaternary structure, the complex is composed of an ATP-binding protein (RbsA), two transmembrane proteins (RbsC) and a solute-binding protein (RbsB).

Its subcellular location is the cell membrane. The enzyme catalyses D-ribose(out) + ATP + H2O = D-ribose(in) + ADP + phosphate + H(+). Part of the ABC transporter complex RbsABC involved in ribose import. Responsible for energy coupling to the transport system. This chain is Ribose import ATP-binding protein RbsA, found in Clostridium perfringens (strain SM101 / Type A).